The sequence spans 471 residues: V-type ATP synthase beta chain (471 aa).

Belongs to the ATPase alpha/beta chains family.

Functionally, produces ATP from ADP in the presence of a proton gradient across the membrane. The V-type beta chain is a regulatory subunit. The sequence is that of V-type ATP synthase beta chain (atpB) from Deinococcus radiodurans (strain ATCC 13939 / DSM 20539 / JCM 16871 / CCUG 27074 / LMG 4051 / NBRC 15346 / NCIMB 9279 / VKM B-1422 / R1).